A 719-amino-acid polypeptide reads, in one-letter code: Protein ENHANCED DISEASE RESISTANCE 2-like (719 aa).

Residues 3–110 (KVVYEGWMVR…WKEKIECVID (108 aa)) form the PH domain. The segment at 134–173 (AGRTASSSDHESPFSALEDENDSQRDLLRRTTIGNGPPES) is disordered. Residues 180 to 392 (EFDAELSNQS…VSGLREWFSQ (213 aa)) enclose the START domain. Residues 414-478 (ALGKGGKHHH…ETDAKKTEEP (65 aa)) form a disordered region. Residues 426 to 439 (SLSIDQTNGASRNS) show a composition bias toward polar residues. Residues 442–461 (MDEDSDDDDEFQIPDSEPEP) are compositionally biased toward acidic residues. Over residues 462 to 477 (ETSKQDQETDAKKTEE) the composition is skewed to basic and acidic residues. Residues 665–685 (GVLGLVIGVITSLVVEMAFLV) form a helical membrane-spanning segment.

It is found in the endoplasmic reticulum membrane. The protein resides in the cell membrane. The protein localises to the endosome membrane. Binds to phosphatidylinositol-4-phosphate (PtdIns(4)P). May regulate the salicylic acid- (SA-) mediated resistance to pathogens. The chain is Protein ENHANCED DISEASE RESISTANCE 2-like (EDR2L) from Arabidopsis thaliana (Mouse-ear cress).